Reading from the N-terminus, the 239-residue chain is Proteasome activator complex subunit 2 (239 aa).

A2 is subject to N-acetylalanine. A Phosphoserine modification is found at S10. Positions 65-87 (DIPIPDPPPKDDEMETDKQEKKE) are disordered. The segment covering 72 to 87 (PPKDDEMETDKQEKKE) has biased composition (basic and acidic residues).

The protein belongs to the PA28 family. Heterodimer of PSME1 and PSME2, which forms a hexameric ring.

In terms of biological role, implicated in immunoproteasome assembly and required for efficient antigen processing. The PA28 activator complex enhances the generation of class I binding peptides by altering the cleavage pattern of the proteasome. The chain is Proteasome activator complex subunit 2 (Psme2) from Mus musculus (Mouse).